Here is a 468-residue protein sequence, read N- to C-terminus: Hydroxymethylglutaryl-CoA synthase B (468 aa).

Glu85 functions as the Proton donor/acceptor in the catalytic mechanism. Residue Cys119 is the Acyl-thioester intermediate of the active site. (3S)-3-hydroxy-3-methylglutaryl-CoA contacts are provided by Cys119, Thr161, Ser211, His250, Lys259, Asn327, and Ser359. Residue His250 is the Proton donor/acceptor of the active site.

The protein belongs to the thiolase-like superfamily. HMG-CoA synthase family.

The enzyme catalyses acetoacetyl-CoA + acetyl-CoA + H2O = (3S)-3-hydroxy-3-methylglutaryl-CoA + CoA + H(+). It participates in metabolic intermediate biosynthesis; (R)-mevalonate biosynthesis; (R)-mevalonate from acetyl-CoA: step 2/3. Its function is as follows. Condenses acetyl-CoA with acetoacetyl-CoA to form HMG-CoA, which is the substrate for HMG-CoA reductase. The chain is Hydroxymethylglutaryl-CoA synthase B (hgsB) from Dictyostelium discoideum (Social amoeba).